Here is a 192-residue protein sequence, read N- to C-terminus: CASP-like protein 4C1 (192 aa).

Residues 1–11 (MRSPQSLRNGE) are compositionally biased toward polar residues. The segment at 1–23 (MRSPQSLRNGETPSPSPRPPRFP) is disordered. The Cytoplasmic portion of the chain corresponds to 1–40 (MRSPQSLRNGETPSPSPRPPRFPTPHFHSTVSLQKLKRFN). Residues 14–23 (SPSPRPPRFP) show a composition bias toward pro residues. A helical transmembrane segment spans residues 41-61 (LLILVFRLSTFCFSLASSVFM). Over 62–75 (LTNPTWYHFDAFRY) the chain is Extracellular. A helical membrane pass occupies residues 76-96 (VFAANAIVAIYSLFEMAASVW). Residues 97 to 107 (EISRGNTLFPE) are Cytoplasmic-facing. A helical transmembrane segment spans residues 108–128 (ILQVWFDFGHDQVFAYLLLSA). Over 129–156 (DSAATALAKTLKGGDTCAASNAFCVQSY) the chain is Extracellular. The helical transmembrane segment at 157–177 (IAIALGFAGFLFLGLSSLLSG) threads the bilayer. Topologically, residues 178 to 192 (FRVVCFLINGSRFYV) are cytoplasmic.

It belongs to the Casparian strip membrane proteins (CASP) family. As to quaternary structure, homodimer and heterodimers.

It localises to the cell membrane. This chain is CASP-like protein 4C1, found in Ricinus communis (Castor bean).